Consider the following 332-residue polypeptide: Ribosomal RNA small subunit methyltransferase C (332 aa).

It belongs to the methyltransferase superfamily. RsmC family. As to quaternary structure, monomer.

The protein localises to the cytoplasm. It catalyses the reaction guanosine(1207) in 16S rRNA + S-adenosyl-L-methionine = N(2)-methylguanosine(1207) in 16S rRNA + S-adenosyl-L-homocysteine + H(+). In terms of biological role, specifically methylates the guanine in position 1207 of 16S rRNA in the 30S particle. The chain is Ribosomal RNA small subunit methyltransferase C from Stutzerimonas stutzeri (strain A1501) (Pseudomonas stutzeri).